The sequence spans 240 residues: Small ribosomal subunit protein uS3 (240 aa).

The region spanning 39–108 is the KH type-2 domain; the sequence is LRKFLKKKLY…ELILNIKEER (70 aa). A compositionally biased stretch (basic and acidic residues) spans 213 to 224; it reads MNSDDTATPERK. The disordered stretch occupies residues 213–240; that stretch reads MNSDDTATPERKAPRRRKGRRNVNAKKN. Residues 225 to 240 are compositionally biased toward basic residues; it reads APRRRKGRRNVNAKKN.

This sequence belongs to the universal ribosomal protein uS3 family. Part of the 30S ribosomal subunit. Forms a tight complex with proteins S10 and S14.

In terms of biological role, binds the lower part of the 30S subunit head. Binds mRNA in the 70S ribosome, positioning it for translation. The chain is Small ribosomal subunit protein uS3 from Nautilia profundicola (strain ATCC BAA-1463 / DSM 18972 / AmH).